The following is a 34-amino-acid chain: Photosystem II reaction center protein M (34 aa).

A helical membrane pass occupies residues 5–25; it reads ILAFIATALFILVPTAFLLII.

The protein belongs to the PsbM family. PSII is composed of 1 copy each of membrane proteins PsbA, PsbB, PsbC, PsbD, PsbE, PsbF, PsbH, PsbI, PsbJ, PsbK, PsbL, PsbM, PsbT, PsbX, PsbY, PsbZ, Psb30/Ycf12, at least 3 peripheral proteins of the oxygen-evolving complex and a large number of cofactors. It forms dimeric complexes.

The protein localises to the plastid. The protein resides in the chloroplast thylakoid membrane. Functionally, one of the components of the core complex of photosystem II (PSII). PSII is a light-driven water:plastoquinone oxidoreductase that uses light energy to abstract electrons from H(2)O, generating O(2) and a proton gradient subsequently used for ATP formation. It consists of a core antenna complex that captures photons, and an electron transfer chain that converts photonic excitation into a charge separation. This subunit is found at the monomer-monomer interface. The polypeptide is Photosystem II reaction center protein M (Phaseolus vulgaris (Kidney bean)).